We begin with the raw amino-acid sequence, 410 residues long: Peptidase T (410 aa).

Residue histidine 79 participates in Zn(2+) binding. Residue aspartate 81 is part of the active site. Aspartate 142 serves as a coordination point for Zn(2+). Glutamate 176 (proton acceptor) is an active-site residue. Zn(2+) contacts are provided by glutamate 177, aspartate 199, and histidine 381.

The protein belongs to the peptidase M20B family. The cofactor is Zn(2+).

The protein resides in the cytoplasm. It carries out the reaction Release of the N-terminal residue from a tripeptide.. Functionally, cleaves the N-terminal amino acid of tripeptides. The sequence is that of Peptidase T from Bacillus cereus (strain ATCC 10987 / NRS 248).